We begin with the raw amino-acid sequence, 304 residues long: Acetaldehyde dehydrogenase 1 (304 aa).

Cysteine 131 functions as the Acyl-thioester intermediate in the catalytic mechanism. Residues 162–170 (SAGPGTRKN) and asparagine 273 contribute to the NAD(+) site.

This sequence belongs to the acetaldehyde dehydrogenase family.

It catalyses the reaction acetaldehyde + NAD(+) + CoA = acetyl-CoA + NADH + H(+). The protein is Acetaldehyde dehydrogenase 1 of Dechloromonas aromatica (strain RCB).